Here is a 344-residue protein sequence, read N- to C-terminus: 2,3,4,5-tetrahydropyridine-2,6-dicarboxylate N-succinyltransferase (344 aa).

Glutamate 205 is a binding site for Mg(2+). Glutamate 221 serves as the catalytic Acyl-anhydride intermediate. Residues arginine 223, glycine 238, serine 241, alanine 264, 279–280, glycine 287, lysine 304, and 317–320 each bind succinyl-CoA; these read EA and RRNS.

Belongs to the type 2 tetrahydrodipicolinate N-succinyltransferase family. Homotrimer.

The protein localises to the cytoplasm. The enzyme catalyses (S)-2,3,4,5-tetrahydrodipicolinate + succinyl-CoA + H2O = (S)-2-succinylamino-6-oxoheptanedioate + CoA. It functions in the pathway amino-acid biosynthesis; L-lysine biosynthesis via DAP pathway; LL-2,6-diaminopimelate from (S)-tetrahydrodipicolinate (succinylase route): step 1/3. Catalyzes the conversion of the cyclic tetrahydrodipicolinate (THDP) into the acyclic N-succinyl-L-2-amino-6-oxopimelate using succinyl-CoA. The sequence is that of 2,3,4,5-tetrahydropyridine-2,6-dicarboxylate N-succinyltransferase from Pseudomonas paraeruginosa (strain DSM 24068 / PA7) (Pseudomonas aeruginosa (strain PA7)).